Consider the following 104-residue polypeptide: Histone H4 (104 aa).

Positions Met1 to Lys21 are disordered.

The protein belongs to the histone H4 family. As to quaternary structure, the nucleosome is a histone octamer containing two molecules each of H2A, H2B, H3 and H4 assembled in one H3-H4 heterotetramer and two H2A-H2B heterodimers. The octamer wraps approximately 147 bp of DNA.

It is found in the nucleus. It localises to the chromosome. In terms of biological role, core component of nucleosome. Nucleosomes wrap and compact DNA into chromatin, limiting DNA accessibility to the cellular machineries which require DNA as a template. Histones thereby play a central role in transcription regulation, DNA repair, DNA replication and chromosomal stability. DNA accessibility is regulated via a complex set of post-translational modifications of histones, also called histone code, and nucleosome remodeling. This chain is Histone H4, found in Sterkiella nova (Ciliate).